Consider the following 274-residue polypeptide: Thiamine kinase (274 aa).

It belongs to the thiamine kinase family.

It carries out the reaction thiamine + ATP = thiamine phosphate + ADP + H(+). The protein operates within cofactor biosynthesis; thiamine diphosphate biosynthesis; thiamine phosphate from thiamine: step 1/1. Catalyzes the ATP-dependent phosphorylation of thiamine to thiamine phosphate. Is involved in thiamine salvage. This is Thiamine kinase from Escherichia coli O17:K52:H18 (strain UMN026 / ExPEC).